The following is a 274-amino-acid chain: Rhamnulose-1-phosphate aldolase (274 aa).

Glutamate 117 is a catalytic residue. Positions 141, 143, and 212 each coordinate Zn(2+).

It belongs to the aldolase class II family. RhaD subfamily. In terms of assembly, homotetramer. Zn(2+) serves as cofactor.

It localises to the cytoplasm. The enzyme catalyses L-rhamnulose 1-phosphate = (S)-lactaldehyde + dihydroxyacetone phosphate. Its pathway is carbohydrate degradation; L-rhamnose degradation; glycerone phosphate from L-rhamnose: step 3/3. Its function is as follows. Catalyzes the reversible cleavage of L-rhamnulose-1-phosphate to dihydroxyacetone phosphate (DHAP) and L-lactaldehyde. This chain is Rhamnulose-1-phosphate aldolase, found in Shigella boydii serotype 4 (strain Sb227).